Reading from the N-terminus, the 357-residue chain is Serpentine receptor class epsilon-31 (357 aa).

7 helical membrane-spanning segments follow: residues 28-48 (VISIFELLSYILCGYILNLSI), 61-81 (LMFLTVPLFAIWYELIIGKFI), 121-141 (LLIFGGFLQWHTIYSIVFGIL), 165-185 (IPIFLIIICQVLAIFMTFIVI), 192-212 (IIARLPFIFLCPISFAVWLFV), 253-273 (LVAVVLVYIMVCFLGIVSLTF), and 283-303 (FVENFLFFHPIPICLTAMFSI).

Belongs to the nematode receptor-like protein sre family.

The protein resides in the membrane. The protein is Serpentine receptor class epsilon-31 (sre-31) of Caenorhabditis elegans.